The primary structure comprises 274 residues: METRERDLERLIPMHKSGASPRDVVLSVPPSPLASPIHVAGKEAIYKVIRSWASKKFMTGCVILLPIAVTFYFTWWFIHFVDGFFSPIYTHLGINMFGLGFVTSITFIFMVGVFMSSWLGASVLSIGEWFIKKMPLVSYIYSASKQISGAISPDQSSGAFKEVAIIRHPHMGEYAFGFITSTVILRGRAGGEELCCVYVPTNHLYLGDIFLISSKDIIRPNLSVREGIEIVISGGMSIPHMLTTLDSETIHRMLESFGILEFGDVCLSLVLAWT.

At 1-60 the chain is on the cytoplasmic side; sequence METRERDLERLIPMHKSGASPRDVVLSVPPSPLASPIHVAGKEAIYKVIRSWASKKFMTG. A helical transmembrane segment spans residues 61–81; sequence CVILLPIAVTFYFTWWFIHFV. Topologically, residues 82 to 93 are extracellular; sequence DGFFSPIYTHLG. Residues 94–114 form a helical membrane-spanning segment; that stretch reads INMFGLGFVTSITFIFMVGVF. Residues 115–274 are Cytoplasmic-facing; it reads MSSWLGASVL…VCLSLVLAWT (160 aa).

This sequence belongs to the plant COV1 protein family.

It localises to the membrane. The chain is Protein LIKE COV 3 from Arabidopsis thaliana (Mouse-ear cress).